A 275-amino-acid chain; its full sequence is 2,3,4,5-tetrahydropyridine-2,6-dicarboxylate N-succinyltransferase (275 aa).

Substrate is bound by residues arginine 108 and aspartate 145.

The protein belongs to the transferase hexapeptide repeat family. Homotrimer.

It is found in the cytoplasm. The catalysed reaction is (S)-2,3,4,5-tetrahydrodipicolinate + succinyl-CoA + H2O = (S)-2-succinylamino-6-oxoheptanedioate + CoA. Its pathway is amino-acid biosynthesis; L-lysine biosynthesis via DAP pathway; LL-2,6-diaminopimelate from (S)-tetrahydrodipicolinate (succinylase route): step 1/3. The chain is 2,3,4,5-tetrahydropyridine-2,6-dicarboxylate N-succinyltransferase from Jannaschia sp. (strain CCS1).